Reading from the N-terminus, the 249-residue chain is RING finger protein 223 (249 aa).

The interval Met-1–Arg-44 is disordered. Over residues Arg-17–Arg-44 the composition is skewed to low complexity. The segment at Cys-51–Arg-102 adopts an RING-type zinc-finger fold. The chain crosses the membrane as a helical span at residues Leu-199–Leu-219. The segment at Pro-230 to Asn-249 is disordered. Positions Ala-235–Asn-249 are enriched in low complexity.

The protein localises to the membrane. This chain is RING finger protein 223 (RNF223), found in Homo sapiens (Human).